Consider the following 93-residue polypeptide: UPF0390 protein C24B10.18 (93 aa).

A disordered region spans residues 1–32 (MAQGEFKKKKNSSANKGGRVTKHSKNPKKGAR). A compositionally biased stretch (basic residues) spans 19 to 31 (RVTKHSKNPKKGA).

This sequence belongs to the UPF0390 family.

This is UPF0390 protein C24B10.18 from Schizosaccharomyces pombe (strain 972 / ATCC 24843) (Fission yeast).